The following is a 453-amino-acid chain: Probable exopolygalacturonase B (453 aa).

Residues 1–16 (MKFFALAALFASTVNS) form the signal peptide. 2 N-linked (GlcNAc...) asparagine glycosylation sites follow: N185 and N225. Catalysis depends on D255, which acts as the Proton donor. A disulfide bridge connects residues C257 and C274. Residues N263 and N275 are each glycosylated (N-linked (GlcNAc...) asparagine). The active site involves H278. PbH1 repeat units follow at residues 295 to 316 (IENVWIENVTLLNGENGARLKA) and 327 to 348 (INNVTYKNIHVENTDNPIVLDQ). N302, N329, N354, and N366 each carry an N-linked (GlcNAc...) asparagine glycan. The stretch at 362–405 (PSRVNFTNIVFEDIYGTSSGKRGKVVADLTCSPNAVCSGIRLKN) is one PbH1 3 repeat. A disulfide bridge connects residues C392 and C398. N436 carries N-linked (GlcNAc...) asparagine glycosylation.

The protein belongs to the glycosyl hydrolase 28 family.

It localises to the secreted. It catalyses the reaction [(1-&gt;4)-alpha-D-galacturonosyl](n) + H2O = alpha-D-galacturonate + [(1-&gt;4)-alpha-D-galacturonosyl](n-1). Specific in hydrolyzing the terminal glycosidic bond of polygalacturonic acid and oligogalacturonates. This is Probable exopolygalacturonase B (pgxB) from Aspergillus fumigatus (strain CBS 144.89 / FGSC A1163 / CEA10) (Neosartorya fumigata).